Consider the following 319-residue polypeptide: Probable carboxylesterase 5 (319 aa).

Methionine 1 bears the N-acetylmethionine mark. The Involved in the stabilization of the negatively charged intermediate by the formation of the oxyanion hole signature appears at 79–81 (HGG). Residues serine 163, aspartate 262, and histidine 294 contribute to the active site.

This sequence belongs to the 'GDXG' lipolytic enzyme family. As to expression, expressed in roots, leaves, stems, flowers and siliques.

The catalysed reaction is a carboxylic ester + H2O = an alcohol + a carboxylate + H(+). Its function is as follows. Carboxylesterase acting on esters with varying acyl chain length. In Arabidopsis thaliana (Mouse-ear cress), this protein is Probable carboxylesterase 5 (CXE5).